Here is a 305-residue protein sequence, read N- to C-terminus: Pseudouridine-5'-phosphate glycosidase (305 aa).

The Proton donor role is filled by glutamate 30. Lysine 91 and valine 111 together coordinate substrate. Residue aspartate 143 coordinates Mn(2+). Substrate is bound at residue 145–147 (SAD). Lysine 164 (nucleophile) is an active-site residue.

The protein belongs to the pseudouridine-5'-phosphate glycosidase family. As to quaternary structure, homotrimer. Requires Mn(2+) as cofactor.

It catalyses the reaction D-ribose 5-phosphate + uracil = psi-UMP + H2O. Its function is as follows. Catalyzes the reversible cleavage of pseudouridine 5'-phosphate (PsiMP) to ribose 5-phosphate and uracil. Functions biologically in the cleavage direction, as part of a pseudouridine degradation pathway. In Mesorhizobium japonicum (strain LMG 29417 / CECT 9101 / MAFF 303099) (Mesorhizobium loti (strain MAFF 303099)), this protein is Pseudouridine-5'-phosphate glycosidase.